A 518-amino-acid chain; its full sequence is Anthranilate synthase component 1 (518 aa).

L-tryptophan is bound by residues Ser41 and 291–293 (PYM). 328–329 (GS) lines the chorismate pocket. Glu361 provides a ligand contact to Mg(2+). Chorismate contacts are provided by residues Tyr449, Arg469, 483 to 485 (GCG), and Gly485. Residue Glu498 coordinates Mg(2+).

Belongs to the anthranilate synthase component I family. In terms of assembly, heterotetramer consisting of two non-identical subunits: a beta subunit (TrpG) and a large alpha subunit (TrpE). Requires Mg(2+) as cofactor.

The enzyme catalyses chorismate + L-glutamine = anthranilate + pyruvate + L-glutamate + H(+). It participates in amino-acid biosynthesis; L-tryptophan biosynthesis; L-tryptophan from chorismate: step 1/5. With respect to regulation, feedback inhibited by tryptophan. Part of a heterotetrameric complex that catalyzes the two-step biosynthesis of anthranilate, an intermediate in the biosynthesis of L-tryptophan. In the first step, the glutamine-binding beta subunit (TrpG) of anthranilate synthase (AS) provides the glutamine amidotransferase activity which generates ammonia as a substrate that, along with chorismate, is used in the second step, catalyzed by the large alpha subunit of AS (TrpE) to produce anthranilate. In the absence of TrpG, TrpE can synthesize anthranilate directly from chorismate and high concentrations of ammonia. This chain is Anthranilate synthase component 1 (trpE), found in Haemophilus influenzae (strain ATCC 51907 / DSM 11121 / KW20 / Rd).